Consider the following 545-residue polypeptide: MAAKDVKFGNDARIKMLRGVNILADAVKVTLGPKGRNVVLDKSFGSPTITKDGVSVAREIELEDKFENMGAQMVKEVASKANDAAGDGTTTATVLAQSIITEGLKAVAAGMNPMDLKRGIDKAVIAAVEELKKLSVPCSDSKAIAQVGTISANSDSTVGELIAQAMEKVGKEGVITVEEGSGLQDELDVVEGMQFDRGYLSPYFINKPETGSIELESPFILLADKKISNIREMLPVLEAVAKAGKPLLIIAEDVEGEALATLVVNTMRGIVKVAAVKAPGFGDRRKAMLQDIATLTAGTVISEEIGLELEKTTLEDLGQAKRVVINKDTTIIIDGVGDEAAIQGRVAQIRQQIEDATSDYDKEKLQERVAKLAGGVAVIKVGAATEVEMKEKKARVEDALHATRAAVEEGVVAGGGVALIRAAHAIAGLKGDNEDQNVGIKVALRAMESPLRQIVVNAGEEASVIANKVKAGEGSFGYNAYTEEYGDMIAMGILDPTKVTRSALQYAASIAGLMITTECMVTDLPRDDKGADMGAGGMGGMGGMM.

Residues 30 to 33 (TLGP), K51, 87 to 91 (DGTTT), G415, and D495 each bind ATP.

The protein belongs to the chaperonin (HSP60) family. In terms of assembly, forms a cylinder of 14 subunits composed of two heptameric rings stacked back-to-back. Interacts with the co-chaperonin GroES.

It is found in the cytoplasm. The enzyme catalyses ATP + H2O + a folded polypeptide = ADP + phosphate + an unfolded polypeptide.. Together with its co-chaperonin GroES, plays an essential role in assisting protein folding. The GroEL-GroES system forms a nano-cage that allows encapsulation of the non-native substrate proteins and provides a physical environment optimized to promote and accelerate protein folding. This Yersinia pestis bv. Antiqua (strain Antiqua) protein is Chaperonin GroEL.